A 372-amino-acid chain; its full sequence is Transaldolase 2 (372 aa).

The Schiff-base intermediate with substrate role is filled by lysine 140.

The protein belongs to the transaldolase family. Type 2 subfamily.

The protein localises to the cytoplasm. It carries out the reaction D-sedoheptulose 7-phosphate + D-glyceraldehyde 3-phosphate = D-erythrose 4-phosphate + beta-D-fructose 6-phosphate. It participates in carbohydrate degradation; pentose phosphate pathway; D-glyceraldehyde 3-phosphate and beta-D-fructose 6-phosphate from D-ribose 5-phosphate and D-xylulose 5-phosphate (non-oxidative stage): step 2/3. Its function is as follows. Transaldolase is important for the balance of metabolites in the pentose-phosphate pathway. This Streptomyces coelicolor (strain ATCC BAA-471 / A3(2) / M145) protein is Transaldolase 2.